Here is a 374-residue protein sequence, read N- to C-terminus: Tuliposide A-converting enzyme b2, amyloplastic (374 aa).

Residues 1 to 68 constitute an amyloplast transit peptide; sequence MSVALFCGPP…TNSSLSPSPT (68 aa). Ser226 acts as the Acyl-ester intermediate in catalysis. Active-site charge relay system residues include Asp316 and His348.

This sequence belongs to the AB hydrolase superfamily. In terms of assembly, homodimer. As to expression, highly expressed in pistil and bulb scales. Lower expression in stem, and barely detected in root, leaf, petal and stamen.

The protein resides in the plastid. It localises to the amyloplast. The enzyme catalyses 6-tuliposide A = tulipalin A + D-glucose. Lactone-forming carboxylesterases, specifically catalyzing intramolecular transesterification, but not hydrolysis. Involved in the biosynthesis of tulipalins, defensive chemicals that show antimicrobial activities against a broad range of strains of bacteria and fungi. Substrates are 6-tuliposide A &gt; 6-tuliposide B. The protein is Tuliposide A-converting enzyme b2, amyloplastic (TCEA-B2) of Tulipa gesneriana (Garden tulip).